Here is a 153-residue protein sequence, read N- to C-terminus: Deoxyuridine 5'-triphosphate nucleotidohydrolase (153 aa).

Residues 71 to 73 (RSG), Asn84, 88 to 90 (TID), and Lys98 each bind substrate.

The protein belongs to the dUTPase family. Mg(2+) is required as a cofactor.

It catalyses the reaction dUTP + H2O = dUMP + diphosphate + H(+). The protein operates within pyrimidine metabolism; dUMP biosynthesis; dUMP from dCTP (dUTP route): step 2/2. Functionally, this enzyme is involved in nucleotide metabolism: it produces dUMP, the immediate precursor of thymidine nucleotides and it decreases the intracellular concentration of dUTP so that uracil cannot be incorporated into DNA. In Ehrlichia canis (strain Jake), this protein is Deoxyuridine 5'-triphosphate nucleotidohydrolase.